The following is a 236-amino-acid chain: Small ribosomal subunit protein uS2c (236 aa).

This sequence belongs to the universal ribosomal protein uS2 family.

It is found in the plastid. The protein localises to the chloroplast. This chain is Small ribosomal subunit protein uS2c (rps2), found in Citrus sinensis (Sweet orange).